The primary structure comprises 439 residues: Xylose isomerase (439 aa).

Residues His-98 and Asp-101 contribute to the active site. 7 residues coordinate Mg(2+): Glu-229, Glu-265, His-268, Asp-293, Asp-304, Asp-306, and Asp-335.

This sequence belongs to the xylose isomerase family. As to quaternary structure, homotetramer. Mg(2+) is required as a cofactor.

The protein localises to the cytoplasm. The enzyme catalyses alpha-D-xylose = alpha-D-xylulofuranose. Functionally, involved in D-xylose catabolism. This chain is Xylose isomerase (xylA), found in Staphylococcus xylosus.